Here is a 549-residue protein sequence, read N- to C-terminus: Probable protein kinase UbiB (549 aa).

A Protein kinase domain is found at 123 to 501 (NFDDTPLASA…QQKAHKSNYL (379 aa)). ATP is bound by residues 129 to 137 (LASASISQV) and Lys152. Residue Asp287 is the Proton acceptor of the active site. Transmembrane regions (helical) follow at residues 498–518 (SNYL…LFSQ) and 520–540 (ATLW…LLGW).

The protein belongs to the ABC1 family. UbiB subfamily.

The protein localises to the cell inner membrane. It participates in cofactor biosynthesis; ubiquinone biosynthesis [regulation]. In terms of biological role, is probably a protein kinase regulator of UbiI activity which is involved in aerobic coenzyme Q (ubiquinone) biosynthesis. This chain is Probable protein kinase UbiB, found in Shewanella loihica (strain ATCC BAA-1088 / PV-4).